A 429-amino-acid chain; its full sequence is tRNA (guanine(9)-N1)-methyltransferase (429 aa).

Residues 131-379 (KERKEAQRRI…AVIPIRKYAP (249 aa)) enclose the SAM-dependent MTase TRM10-type domain. S-adenosyl-L-methionine contacts are provided by residues 285 to 286 (LS), Gly305, 309 to 313 (DRNRH), Cys317, Leu331, and 344 to 346 (KAL). Asp309 acts as the Proton acceptor in catalysis. The interval 383-429 (AKRAKTETKRNEKVEEEVECTSAEGEEDIGVIEESAEVDPEDVFSNQ) is disordered. Residues 386 to 395 (AKTETKRNEK) are compositionally biased toward basic and acidic residues. A compositionally biased stretch (acidic residues) spans 396-429 (VEEEVECTSAEGEEDIGVIEESAEVDPEDVFSNQ).

This sequence belongs to the class IV-like SAM-binding methyltransferase superfamily. TRM10 family. In terms of assembly, monomer.

Its subcellular location is the cytoplasm. The protein resides in the nucleus. It catalyses the reaction guanosine(9) in tRNA + S-adenosyl-L-methionine = N(1)-methylguanosine(9) in tRNA + S-adenosyl-L-homocysteine + H(+). S-adenosyl-L-methionine-dependent guanine N(1)-methyltransferase that catalyzes the formation of N(1)-methylguanine at position 9 (m1G9) in cytoplasmic tRNA. This is tRNA (guanine(9)-N1)-methyltransferase from Cryptococcus neoformans var. neoformans serotype D (strain B-3501A) (Filobasidiella neoformans).